A 238-amino-acid polypeptide reads, in one-letter code: ATP-dependent dethiobiotin synthetase BioD (238 aa).

12–17 lines the ATP pocket; that stretch reads EVGKTV. Position 16 (T16) interacts with Mg(2+). K37 is a catalytic residue. T41 is a binding site for substrate. Residues D50, 109–112, 170–171, and 200–202 each bind ATP; these read EGAG, GS, and PAG. Mg(2+)-binding residues include D50 and E109.

Belongs to the dethiobiotin synthetase family. In terms of assembly, homodimer. Mg(2+) serves as cofactor.

It is found in the cytoplasm. The enzyme catalyses (7R,8S)-7,8-diammoniononanoate + CO2 + ATP = (4R,5S)-dethiobiotin + ADP + phosphate + 3 H(+). It functions in the pathway cofactor biosynthesis; biotin biosynthesis; biotin from 7,8-diaminononanoate: step 1/2. Catalyzes a mechanistically unusual reaction, the ATP-dependent insertion of CO2 between the N7 and N8 nitrogen atoms of 7,8-diaminopelargonic acid (DAPA, also called 7,8-diammoniononanoate) to form a ureido ring. This Streptomyces coelicolor (strain ATCC BAA-471 / A3(2) / M145) protein is ATP-dependent dethiobiotin synthetase BioD.